The primary structure comprises 36 residues: Glucagon-2 (36 aa).

This sequence belongs to the glucagon family.

It is found in the secreted. In terms of biological role, glucagon plays a key role in glucose metabolism and homeostasis. Regulates blood glucose by increasing gluconeogenesis and decreasing glycolysis. The sequence is that of Glucagon-2 from Huso dauricus (Kaluga sturgeon).